A 230-amino-acid polypeptide reads, in one-letter code: 2,3-bisphosphoglycerate-dependent phosphoglycerate mutase (230 aa).

Residues 8 to 15 (RHGESEWN), 21 to 22 (TG), Arg60, 87 to 90 (ERHY), Lys98, 114 to 115 (RR), and 183 to 184 (GN) contribute to the substrate site. Catalysis depends on His9, which acts as the Tele-phosphohistidine intermediate. Glu87 functions as the Proton donor/acceptor in the catalytic mechanism.

This sequence belongs to the phosphoglycerate mutase family. BPG-dependent PGAM subfamily.

The catalysed reaction is (2R)-2-phosphoglycerate = (2R)-3-phosphoglycerate. The protein operates within carbohydrate degradation; glycolysis; pyruvate from D-glyceraldehyde 3-phosphate: step 3/5. Functionally, catalyzes the interconversion of 2-phosphoglycerate and 3-phosphoglycerate. The sequence is that of 2,3-bisphosphoglycerate-dependent phosphoglycerate mutase from Streptococcus thermophilus (strain CNRZ 1066).